Reading from the N-terminus, the 144-residue chain is Acylphosphatase-like protein MJ1331 (144 aa).

The Acylphosphatase-like domain occupies 8-100; sequence TYELRIYGNV…FPNGLNKIST (93 aa).

This Methanocaldococcus jannaschii (strain ATCC 43067 / DSM 2661 / JAL-1 / JCM 10045 / NBRC 100440) (Methanococcus jannaschii) protein is Acylphosphatase-like protein MJ1331.